Consider the following 240-residue polypeptide: Cysteine-rich venom protein (240 aa).

The first 19 residues, 1 to 19 (MIAFIVLPILAAVLQQSSG), serve as a signal peptide directing secretion. Positions 39 to 166 (DLHNSLRRSV…EYSYFYVCQY (128 aa)) constitute an SCP domain. 8 disulfides stabilise this stretch: Cys75–Cys153, Cys92–Cys167, Cys148–Cys164, Cys186–Cys193, Cys189–Cys198, Cys202–Cys235, Cys211–Cys229, and Cys220–Cys233. The ShKT domain occupies 202–235 (CRQENKFTNCDSLVRQSSCQDNYMKTNCPASCFC).

The protein belongs to the CRISP family. As to expression, expressed by the venom gland.

It localises to the secreted. In terms of biological role, blocks contraction of smooth muscle elicited by high potassium-induced depolarization, but does not block caffeine-stimulated contraction. May target voltage-gated calcium channels on smooth muscle. The chain is Cysteine-rich venom protein from Protobothrops jerdonii (Jerdon's pitviper).